A 141-amino-acid polypeptide reads, in one-letter code: Hemoglobin subunit alpha (141 aa).

The region spanning 1–141 is the Globin domain; the sequence is VLSPADKTNV…VSTVLTSKYR (141 aa). A Phosphoserine modification is found at Ser3. Lys7 carries the post-translational modification N6-succinyllysine. The residue at position 8 (Thr8) is a Phosphothreonine. An N6-succinyllysine modification is found at Lys11. Lys16 is subject to N6-acetyllysine; alternate. The residue at position 16 (Lys16) is an N6-succinyllysine; alternate. Position 24 is a phosphotyrosine (Tyr24). A Phosphoserine modification is found at Ser35. Lys40 is subject to N6-succinyllysine. Phosphoserine is present on Ser49. His58 is an O2 binding site. His87 is a heme b binding site. The residue at position 102 (Ser102) is a Phosphoserine. The residue at position 108 (Thr108) is a Phosphothreonine. Ser124 is modified (phosphoserine). Phosphothreonine occurs at positions 134 and 137. A Phosphoserine modification is found at Ser138.

The protein belongs to the globin family. As to quaternary structure, heterotetramer of two alpha chains and two beta chains. Red blood cells.

Functionally, involved in oxygen transport from the lung to the various peripheral tissues. Its function is as follows. Hemopressin acts as an antagonist peptide of the cannabinoid receptor CNR1. Hemopressin-binding efficiently blocks cannabinoid receptor CNR1 and subsequent signaling. This chain is Hemoglobin subunit alpha (HBA), found in Lutra lutra (European river otter).